We begin with the raw amino-acid sequence, 576 residues long: Arginine--tRNA ligase (576 aa).

Positions 128–136 (PTGPMHIGH) match the 'HIGH' region motif.

Belongs to the class-I aminoacyl-tRNA synthetase family. As to quaternary structure, monomer.

It localises to the cytoplasm. It catalyses the reaction tRNA(Arg) + L-arginine + ATP = L-arginyl-tRNA(Arg) + AMP + diphosphate. The sequence is that of Arginine--tRNA ligase from Rickettsia conorii (strain ATCC VR-613 / Malish 7).